Consider the following 425-residue polypeptide: G protein-activated inward rectifier potassium channel 2 (425 aa).

Topologically, residues 1–91 (MTMAKLTESM…IFTTLVDLKW (91 aa)) are cytoplasmic. Ser-18 and Ser-25 each carry phosphoserine. The helical transmembrane segment at 92-116 (RFNLLIFVMVYTVTWLFFGMIWWLI) threads the bilayer. The Extracellular portion of the chain corresponds to 117–140 (AYIRGDMDHIEDPSWTPCVTNLNG). An intramembrane region (helical; Pore-forming) is located at residues 141–152 (FVSAFLFSIETE). An intramembrane region (pore-forming) is located at residues 153-159 (TTIGYGY). The Selectivity filter motif lies at 154 to 159 (TIGYGY). The Extracellular portion of the chain corresponds to 160 to 168 (RVITDKCPE). A helical membrane pass occupies residues 169–190 (GIILLLIQSVLGSIVNAFMVGC). Topologically, residues 191–425 (MFVKISQPKK…VANLENESKV (235 aa)) are cytoplasmic. The interval 392 to 425 (NQHAELETEEEEKNPEELTERNGDVANLENESKV) is disordered. The PDZ-binding motif lies at 422 to 425 (ESKV).

It belongs to the inward rectifier-type potassium channel (TC 1.A.2.1) family. KCNJ6 subfamily. As to quaternary structure, associates with KCNJ3/GIRK1to form a G-protein-activated heteromultimer pore-forming unit. Associates with KCNJ5/GRIK4 to form a G-protein-activated heteromultimer pore-forming unit. The resulting inward current is much larger. Interacts (via PDZ-binding motif) with SNX27 (via PDZ domain); the interaction is required when endocytosed to prevent degradation in lysosomes and promote recycling to the plasma membrane. In terms of assembly, associates with KCNJ3/GRIK1 to form a G-protein-activated heteromultimer pore-forming unit. Associates with KCNJ3/GRIK1 to form a G-protein-activated heteromultimer pore-forming unit. The resulting inward current is much larger. As to expression, expressed in the brain.

The protein localises to the membrane. It catalyses the reaction K(+)(in) = K(+)(out). Activated by phosphatidylinositol 4,5 biphosphate (PtdIns(4,5)P2). Functionally, inward rectifier potassium channels are characterized by a greater tendency to allow potassium to flow into the cell rather than out of it. Their voltage dependence is regulated by the concentration of extracellular potassium; as external potassium is raised, the voltage range of the channel opening shifts to more positive voltages. The inward rectification is mainly due to the blockage of outward current by internal magnesium. This potassium channel is controlled by G proteins. Forms a functional channel in association with KCNJ3/GIRK1. In terms of biological role, inward rectifier potassium channels are characterized by a greater tendency to allow potassium to flow into the cell rather than out of it. Their voltage dependence is regulated by the concentration of extracellular potassium; as external potassium is raised, the voltage range of the channel opening shifts to more positive voltages. The inward rectification is mainly due to the blockage of outward current by internal magnesium. This potassium channel is controlled by G proteins. This Mus musculus (Mouse) protein is G protein-activated inward rectifier potassium channel 2 (Kcnj6).